Consider the following 547-residue polypeptide: Glucose-6-phosphate isomerase (547 aa).

Catalysis depends on glutamate 355, which acts as the Proton donor. Active-site residues include histidine 386 and lysine 512.

Belongs to the GPI family.

It localises to the cytoplasm. The catalysed reaction is alpha-D-glucose 6-phosphate = beta-D-fructose 6-phosphate. It participates in carbohydrate biosynthesis; gluconeogenesis. The protein operates within carbohydrate degradation; glycolysis; D-glyceraldehyde 3-phosphate and glycerone phosphate from D-glucose: step 2/4. Functionally, catalyzes the reversible isomerization of glucose-6-phosphate to fructose-6-phosphate. The chain is Glucose-6-phosphate isomerase from Corynebacterium diphtheriae (strain ATCC 700971 / NCTC 13129 / Biotype gravis).